The sequence spans 265 residues: 4-hydroxy-tetrahydrodipicolinate reductase (265 aa).

Residues 7–12 (GASGRM), aspartate 33, 96–98 (GTT), and 120–123 (AANM) contribute to the NAD(+) site. Histidine 153 (proton donor/acceptor) is an active-site residue. Histidine 154 contributes to the (S)-2,3,4,5-tetrahydrodipicolinate binding site. Residue lysine 157 is the Proton donor of the active site. 163–164 (GT) serves as a coordination point for (S)-2,3,4,5-tetrahydrodipicolinate.

This sequence belongs to the DapB family.

It localises to the cytoplasm. It carries out the reaction (S)-2,3,4,5-tetrahydrodipicolinate + NAD(+) + H2O = (2S,4S)-4-hydroxy-2,3,4,5-tetrahydrodipicolinate + NADH + H(+). The enzyme catalyses (S)-2,3,4,5-tetrahydrodipicolinate + NADP(+) + H2O = (2S,4S)-4-hydroxy-2,3,4,5-tetrahydrodipicolinate + NADPH + H(+). The protein operates within amino-acid biosynthesis; L-lysine biosynthesis via DAP pathway; (S)-tetrahydrodipicolinate from L-aspartate: step 4/4. Its function is as follows. Catalyzes the conversion of 4-hydroxy-tetrahydrodipicolinate (HTPA) to tetrahydrodipicolinate. The chain is 4-hydroxy-tetrahydrodipicolinate reductase from Cupriavidus pinatubonensis (strain JMP 134 / LMG 1197) (Cupriavidus necator (strain JMP 134)).